A 291-amino-acid chain; its full sequence is N-acetylmannosamine kinase (291 aa).

Residues 5-12 and 132-139 contribute to the ATP site; these read AIDIGGTK and GVGGGVVC. Zn(2+) is bound by residues His156, Cys166, Cys168, and Cys173.

It belongs to the ROK (NagC/XylR) family. NanK subfamily. Homodimer.

It carries out the reaction an N-acyl-D-mannosamine + ATP = an N-acyl-D-mannosamine 6-phosphate + ADP + H(+). The protein operates within amino-sugar metabolism; N-acetylneuraminate degradation; D-fructose 6-phosphate from N-acetylneuraminate: step 2/5. Catalyzes the phosphorylation of N-acetylmannosamine (ManNAc) to ManNAc-6-P. This chain is N-acetylmannosamine kinase, found in Salmonella arizonae (strain ATCC BAA-731 / CDC346-86 / RSK2980).